Consider the following 172-residue polypeptide: Propanediol dehydratase small subunit (172 aa).

This sequence belongs to the diol/glycerol dehydratase small subunit family. As to quaternary structure, the propanediol dehydratase enzyme is a heterotrimeric complex composed of a large (PduC), a medium (PduD) and a small (PduE) subunit. The cofactor is adenosylcob(III)alamin.

The protein localises to the bacterial microcompartment. The enzyme catalyses propane-1,2-diol = propanal + H2O. It functions in the pathway polyol metabolism; 1,2-propanediol degradation. In terms of biological role, part of the PduCDE complex that catalyzes the dehydration of 1,2-propanediol (1,2-PD) to propionaldehyde. Localized in the bacterial microcompartment (BMC) dedicated to 1,2-PD degradation. Functionally, expression of a cosmid containing the full 21-gene pdu operon in E.coli allows E.coli to grow on 1,2-propanediol (1,2-PD) with the appearance of BMCs in its cytoplasm. The 1,2-PD-specific bacterial microcompartment (BMC) concentrates low levels of 1,2-PD catabolic enzymes, concentrates volatile reaction intermediates thus enhancing pathway flux and keeps the level of toxic, mutagenic propionaldehyde low. In Citrobacter freundii, this protein is Propanediol dehydratase small subunit.